The primary structure comprises 552 residues: Non-structural protein NS1 (552 aa).

Belongs to the orbivirus non-structural protein NS1 family.

The protein is Non-structural protein NS1 (Segment-5) of Bluetongue virus 1 (isolate Australia) (BTV 1).